The following is a 587-amino-acid chain: DELLA protein RGA (587 aa).

The interval methionine 1–lysine 26 is disordered. Residues aspartate 44–alanine 48 carry the DELLA motif motif. Positions leucine 66–glutamate 70 match the LEXLE motif motif. The VHYNP motif motif lies at valine 89–proline 93. The interval isoleucine 152 to glycine 181 is disordered. A compositionally biased stretch (polar residues) spans aspartate 153–valine 175. Residues valine 212–lysine 581 form the GRAS domain. Residues valine 219 to isoleucine 273 are leucine repeat I (LRI). The tract at residues glutamine 292–glycine 357 is VHIID. The VHIID signature appears at valine 323–aspartate 327. The segment at glutamate 371–serine 403 is leucine repeat II (LRII). The tract at residues valine 415–asparagine 502 is PFYRE. Residues leucine 423–leucine 427 carry the LXXLL motif motif. The segment at alanine 505 to lysine 581 is SAW.

This sequence belongs to the GRAS family. DELLA subfamily. Interacts directly with the GID2/SLY1 component of the SCF(GID2) complex. Interacts (via N-terminus) with GID1A, GID1B and GID1B (via N-terminus). Binds to bHLH transcription factors such as MYC2, PIF1, PIF4, PIF6 and SPT. Interacts with the BOI proteins BOI, BRG1, BRG2 and BRG3. Interacts with NFYC9. Interacts with TOPP4. Interacts with FLZ5. Binds to zinc finger proteins MGP/IDD3, IDD4, IDD5, BIB/IDD9 and JKD/IDD10 in the nucleus. Binds to and coactivates GAF1/IDD2 and ENY/IDD1. Binds to PDF2 and ATML1. Phosphorylated. Phosphorylation may increase the interaction with GID2. In terms of processing, gibberellin (GA) induces dephosphorylation of RGA by TOPP4 and subsequent degradation by the proteasomal pathway. Post-translationally, ubiquitinated. Upon GA application it is ubiquitinated by the SCF(GID2) complex, leading to its subsequent degradation. O-fucosylated by SPY. O-fucosylation enhances RGA activity by promoting RGA binding to key transcription factors in brassinosteroid and light signaling pathways. As to expression, ubiquitously expressed. Expressed in roots, rosette leaves, bolting and mature stems, young and mature siliques, flower buds and influorescences.

It localises to the nucleus. Functionally, probable transcriptional regulator that acts as a repressor of the gibberellin (GA) signaling pathway. Probably acts by participating in large multiprotein complexes that repress transcription of GA-inducible genes. Positively regulates XERICO expression in seeds. Upon GA application, it is degraded by the proteasome, allowing the GA signaling pathway. Compared to other DELLA proteins, it is the most sensitive to GA application. No effect of the BOI proteins on its stability. Its activity is probably regulated by other phytohormones such as auxin and ethylene, attenuation of auxin transport delaying its GA-induced degradation. Involved in the regulation of seed dormancy and germination, including glucose-induced delay of seed germination. The protein is DELLA protein RGA of Arabidopsis thaliana (Mouse-ear cress).